The sequence spans 165 residues: Bark lectin isoform 2 (165 aa).

N-linked (GlcNAc...) asparagine glycans are attached at residues N27 and N57. 2 disulfides stabilise this stretch: C33–C80 and C126–C133.

The protein belongs to the protease inhibitor I3 (leguminous Kunitz-type inhibitor) family. In terms of assembly, dimer.

Its function is as follows. Glucose and N-acetylglucosamine binding lectin. Has hemagglutinating activity against human and rabbit erythrocytes which does not require divalent cations. Inhibits factor Xa and, to a lesser extent, trypsin. Does not inhibit neutrophil elastase, human plasma kallikrein, papain, human plasmin, porcine pancreatic kallikrein and bovin chymotrypsin. Has insecticidal activity against the termite species N.corniger. Induces apoptosis in prostrate cancer cell lines DU145 and PC3. The chain is Bark lectin isoform 2 from Crateva tapia (Garlic-pear tree).